The primary structure comprises 805 residues: Zinc finger CCCH domain-containing protein 11B (805 aa).

2 C3H1-type zinc fingers span residues 2-29 (PNQG…HCEA) and 31-57 (LGNE…HMEI). 6 disordered regions span residues 140 to 194 (KVES…GLRV), 223 to 351 (KKMK…DKVN), 364 to 433 (MLLE…TCIK), 449 to 468 (IVAS…SMQE), 481 to 506 (KALR…PGAR), and 715 to 805 (VTVP…PLEL). Residues 160–175 (ADDDEDDDDQFSEEGD) are compositionally biased toward acidic residues. Residues 364–390 (MLLERASQKHGESQTKLKTEGPSKTDD) show a composition bias toward basic and acidic residues. Positions 391 to 402 (STSGARSSSTIR) are enriched in polar residues. A coiled-coil region spans residues 403–423 (IKTFSEVLAEEEHRQQEAERQ). Basic and acidic residues-rich tracts occupy residues 412–433 (EEEH…TCIK) and 455–468 (QSEE…SMQE). Low complexity-rich tracts occupy residues 486–498 (QQSS…SPSQ) and 730–749 (PPTQ…PSSS). Residues 750–763 (QMSMKTRRLSSAST) show a composition bias toward polar residues. A compositionally biased stretch (acidic residues) spans 789–805 (EIDLDPGKDEDDLPLEL).

Functionally, may play a role in mRNA transport. The sequence is that of Zinc finger CCCH domain-containing protein 11B from Homo sapiens (Human).